The following is a 332-amino-acid chain: UPF0194 membrane protein YbhG (332 aa).

Positions 1 to 16 (MMKKPVVIGLAVVVLA) are cleaved as a signal peptide. The stretch at 108-209 (EEIAQAAAAV…LNLQDSTLIA (102 aa)) forms a coiled coil.

The protein belongs to the UPF0194 family.

It localises to the periplasm. This is UPF0194 membrane protein YbhG from Shigella boydii serotype 4 (strain Sb227).